Reading from the N-terminus, the 202-residue chain is Ras-related protein Rab-2B (202 aa).

Residue 31–38 (GDSAVGKS) coordinates GTP. The Effector region motif lies at 53 to 61 (SDFTIGVEF). GTP-binding positions include 79–83 (DTAGQ) and 137–140 (NKAD).

It belongs to the small GTPase superfamily. Rab family. In terms of processing, this sequence lacks the C-terminal cysteine motifs subject to isoprenylation in other Rab proteins.

The polypeptide is Ras-related protein Rab-2B (rab2B) (Dictyostelium discoideum (Social amoeba)).